Reading from the N-terminus, the 456-residue chain is tRNA-2-methylthio-N(6)-dimethylallyladenosine synthase (456 aa).

The region spanning 13–129 (RYLYVRTFGC…IASLLEEVER (117 aa)) is the MTTase N-terminal domain. Positions 22, 58, 92, 168, 172, and 175 each coordinate [4Fe-4S] cluster. The Radical SAM core domain maps to 154-384 (GTGDVVAQVT…QSIQADITLQ (231 aa)). In terms of domain architecture, TRAM spans 387-450 (LAETGTVREV…SHSLKGELLS (64 aa)).

The protein belongs to the methylthiotransferase family. MiaB subfamily. In terms of assembly, monomer. [4Fe-4S] cluster is required as a cofactor.

It is found in the cytoplasm. The catalysed reaction is N(6)-dimethylallyladenosine(37) in tRNA + (sulfur carrier)-SH + AH2 + 2 S-adenosyl-L-methionine = 2-methylsulfanyl-N(6)-dimethylallyladenosine(37) in tRNA + (sulfur carrier)-H + 5'-deoxyadenosine + L-methionine + A + S-adenosyl-L-homocysteine + 2 H(+). In terms of biological role, catalyzes the methylthiolation of N6-(dimethylallyl)adenosine (i(6)A), leading to the formation of 2-methylthio-N6-(dimethylallyl)adenosine (ms(2)i(6)A) at position 37 in tRNAs that read codons beginning with uridine. The protein is tRNA-2-methylthio-N(6)-dimethylallyladenosine synthase of Syntrophobacter fumaroxidans (strain DSM 10017 / MPOB).